Consider the following 289-residue polypeptide: MSEPFGIVAGALNVAGLFNNCVDCFEYVQLGRPFGRDYERCQLRLDIAKARLSRWGEAVKINDDPRFHSDAPTDKSVQLAKSIVEEILLLFESAQKTSKRYELVADQQDLVVFEDKDMKPIGRALHRRLNDLVSRRQKQTSLAKKTAWALYDGKSLEKIVDQVARFVDELEKAFPIEAVCHKLAEIEIEEVEDEASLTILKDAAGGIDAAMSDAAAQKIDAIVGRNSAKDIRTEERARVQLGNVVTAAALHGGIRISDQTTNSVETVVGKGESRVLIGNEYGGKGFWDN.

Positions 1-227 (MSEPFGIVAG…KIDAIVGRNS (227 aa)) are globular domain. Residues 218 to 289 (KIDAIVGRNS…EYGGKGFWDN (72 aa)) are prion domain (PrD).

Homodimer. Forms heterodimers with het-S.

It localises to the cytoplasm. Responsible for heterokaryon incompatibility, a process that ensures that during spontaneous, vegetative cell fusion only compatible cells from the same colony survive (non-self-recognition). Forms a prion for the non-Mendelian trait [het-s]. Interacts with het-S from incompatible cells to trigger a lethal reaction that prevents the formation of viable heterokaryons. It is unknown if the native, soluble protein has a cellular function. The protein is Heterokaryon incompatibility protein s (het-s) of Podospora anserina (Pleurage anserina).